We begin with the raw amino-acid sequence, 155 residues long: DNA gyrase inhibitor (155 aa).

Belongs to the DNA gyrase inhibitor family. In terms of assembly, interacts with DNA gyrase.

The protein resides in the cytoplasm. Its function is as follows. Inhibits the supercoiling activity of DNA gyrase. Acts by inhibiting DNA gyrase at an early step, prior to (or at the step of) binding of DNA by the gyrase. It protects cells against toxins that target DNA gyrase, by inhibiting activity of these toxins and reducing the formation of lethal double-strand breaks in the cell. The sequence is that of DNA gyrase inhibitor from Salmonella arizonae (strain ATCC BAA-731 / CDC346-86 / RSK2980).